The primary structure comprises 125 residues: MIKPLLAVMIGGCAGCVIRWLLAVRLNAWFPNLPPGTLLVNLVGGLIIGATVAWFARYPGIDPNWKLLITTGLCGGMTTFSTFSLEVVTLLQAGNYLWAVISVLTHVTGSLLMTIAGFWLVSLLF.

Helical transmembrane passes span 4–24 (PLLAVMIGGCAGCVIRWLLAV), 36–56 (GTLLVNLVGGLIIGATVAWFA), 68–88 (LITTGLCGGMTTFSTFSLEVV), and 100–120 (VISVLTHVTGSLLMTIAGFWL). Residues glycine 75 and threonine 78 each contribute to the Na(+) site.

This sequence belongs to the fluoride channel Fluc/FEX (TC 1.A.43) family.

Its subcellular location is the cell inner membrane. It carries out the reaction fluoride(in) = fluoride(out). Its activity is regulated as follows. Na(+) is not transported, but it plays an essential structural role and its presence is essential for fluoride channel function. Fluoride-specific ion channel. Important for reducing fluoride concentration in the cell, thus reducing its toxicity. This Erwinia tasmaniensis (strain DSM 17950 / CFBP 7177 / CIP 109463 / NCPPB 4357 / Et1/99) protein is Fluoride-specific ion channel FluC.